A 176-amino-acid polypeptide reads, in one-letter code: Membrane-anchored junction protein (176 aa).

The Nuclear portion of the chain corresponds to 1 to 151 (MSLKPFTYPF…QHNSPPPKER (151 aa)). The disordered stretch occupies residues 59–150 (AVMRKRKHMD…LQHNSPPPKE (92 aa)). Over residues 95–107 (PPVETRRNRERKT) the composition is skewed to basic and acidic residues. Positions 108 to 120 (QQGLQETLASDIT) are enriched in polar residues. A helical membrane pass occupies residues 152–170 (AATGFFGFLSSLFPFRYFF). Over 171 to 176 (RKSSHS) the chain is Perinuclear space.

It belongs to the MAJIN family. In terms of assembly, component of the MAJIN-TERB1-TERB2 complex, composed of MAJIN, TERB1 and TERB2.

The protein resides in the nucleus inner membrane. The protein localises to the chromosome. It is found in the telomere. Meiosis-specific telomere-associated protein involved in meiotic telomere attachment to the nucleus inner membrane, a crucial step for homologous pairing and synapsis. Component of the MAJIN-TERB1-TERB2 complex, which promotes telomere cap exchange by mediating attachment of telomeric DNA to the inner nuclear membrane and replacement of the protective cap of telomeric chromosomes: in early meiosis, the MAJIN-TERB1-TERB2 complex associates with telomeric DNA and the shelterin/telosome complex. During prophase, the complex matures and promotes release of the shelterin/telosome complex from telomeric DNA. In the complex, MAJIN acts as the anchoring subunit to the nucleus inner membrane. MAJIN shows DNA-binding activity, possibly for the stabilization of telomere attachment on the nucleus inner membrane. The chain is Membrane-anchored junction protein from Homo sapiens (Human).